The chain runs to 472 residues: F-box protein At3g03040 (472 aa).

In terms of domain architecture, F-box spans 1 to 49 (MDLLSSLPDEVRCLILSFLTTKESASTSVLSKKWRNLFALVPNLDFDDS).

The protein is F-box protein At3g03040 of Arabidopsis thaliana (Mouse-ear cress).